Consider the following 169-residue polypeptide: Secreted RxLR effector protein BLN03 (169 aa).

A signal peptide spans methionine 1–alanine 21. A dEER motif is present at residues threonine 51 to arginine 54. The helical transmembrane segment at glycine 149 to valine 169 threads the bilayer.

This sequence belongs to the RxLR effector family. Interacts with host transcription factor NAC069.

It is found in the secreted. Its subcellular location is the host membrane. Functionally, secreted effector that inhibits stress-induced relocalization of the endoplasmic reticulum tail-anchored transcription factors to the nucleus, thus affecting stress responses. The polypeptide is Secreted RxLR effector protein BLN03 (Bremia lactucae (Lettuce downy mildew)).